A 401-amino-acid polypeptide reads, in one-letter code: Thermophilic serine proteinase (401 aa).

The signal sequence occupies residues 1 to 24; it reads MKFKAIVSLSLAVSMSLFPFLVEA. The propeptide occupies 25 to 121; the sequence is ASNDGVESPK…AEPNYLFNAA (97 aa). Aspartate 126 provides a ligand contact to Ca(2+). In terms of domain architecture, Peptidase S8 spans 133 to 399; that stretch reads QYGPQNTYTD…YGRINSYNAV (267 aa). The active-site Charge relay system is the aspartate 160. Ca(2+) is bound by residues proline 168, aspartate 169, aspartate 171, aspartate 179, aspartate 184, and aspartate 186. The active-site Charge relay system is the histidine 193. Residues glutamate 204, asparagine 207, threonine 209, and isoleucine 211 each coordinate Ca(2+). The cysteines at positions 258 and 260 are disulfide-linked. Tyrosine 297, valine 300, and aspartate 323 together coordinate Na(+). Serine 347 functions as the Charge relay system in the catalytic mechanism.

This sequence belongs to the peptidase S8 family. The cofactor is Ca(2+). It depends on Na(+) as a cofactor.

The protein localises to the secreted. This Bacillus sp. (strain AK1) protein is Thermophilic serine proteinase.